The primary structure comprises 533 residues: MKQIWQALKAHQQAVEHRAILDLFTDPRRAETFSTRLGDMLFDWSKTNIDHTARDLLIDLAGAAGVAEKREAMFSGAKINETEGRAVLHTALRNMDRPVRVDGVDVTPALRETHARMQAFVRDLRSGRFTGQGGPITDVVNIGIGGSDLGPAMACLALAPYADGPRCHFVSNVDGAHIHDTLQDLDPATTLVIVASKTFTTIETMTNAETAKRWMAKRVSDPAAQFAAVSTAADKTAAFGIDASRVFGFEDWVGGRYSMWGPIGLALMIAIGPEAFDAFLAGGAEMDRHFREAPFAENLPVLLALVGLWHNQICGHATRAVLPYDQRLARLPAYLQQLEMESNGKRVAMDGHELTHHSGPIVWGEPGTNGQHAFYQLIHQGSRIVPCEFLVAREGHEPDLAHQHLLLVSNCLAQSEALLRGRSVEEARAILGKKGLTGSELERQARHRVFPGNRPSTVLAYEKLTPATLGRIVALYEHRVFVEGVILGINSYDQWGVELGKELALALQPMLEGRAGTEGKDGSTAQLVAYLRR.

Glu341 serves as the catalytic Proton donor. Active-site residues include His372 and Lys501.

The protein belongs to the GPI family.

It is found in the cytoplasm. The catalysed reaction is alpha-D-glucose 6-phosphate = beta-D-fructose 6-phosphate. It participates in carbohydrate biosynthesis; gluconeogenesis. The protein operates within carbohydrate degradation; glycolysis; D-glyceraldehyde 3-phosphate and glycerone phosphate from D-glucose: step 2/4. Catalyzes the reversible isomerization of glucose-6-phosphate to fructose-6-phosphate. The sequence is that of Glucose-6-phosphate isomerase from Cereibacter sphaeroides (strain ATCC 17023 / DSM 158 / JCM 6121 / CCUG 31486 / LMG 2827 / NBRC 12203 / NCIMB 8253 / ATH 2.4.1.) (Rhodobacter sphaeroides).